Consider the following 409-residue polypeptide: Inactive serine protease 35 (409 aa).

The N-terminal stretch at 1-17 is a signal peptide; the sequence is MLLWLIFFTPGWTLIDG. Asn-87 and Asn-107 each carry an N-linked (GlcNAc...) asparagine glycan. A Peptidase S1 domain is found at 120–404; the sequence is VYGTDSRFSI…ICLWIHGNDA (285 aa). A disulfide bridge connects residues Cys-150 and Cys-166. A compositionally biased stretch (basic residues) spans 188-203; it reads RNKSGGKKRRGSKRSR. The interval 188–246 is disordered; sequence RNKSGGKKRRGSKRSRRETSGGDQREGPREHLQDRVKAGRRRKQSGGGQRVSEGRPSFR. Over residues 204 to 224 the composition is skewed to basic and acidic residues; sequence RETSGGDQREGPREHLQDRVK.

The protein belongs to the peptidase S1 family.

The protein localises to the secreted. The sequence is that of Inactive serine protease 35 (PRSS35) from Macaca mulatta (Rhesus macaque).